Reading from the N-terminus, the 597-residue chain is Aspartate--tRNA(Asp/Asn) ligase (597 aa).

Position 170 (Glu170) interacts with L-aspartate. Positions Gln194–Lys197 are aspartate. Arg216 lines the L-aspartate pocket. ATP is bound by residues Arg216–Glu218 and Gln225. An L-aspartate-binding site is contributed by His448. Glu482 serves as a coordination point for ATP. Arg489 is an L-aspartate binding site. ATP is bound at residue Gly534–Arg537. The tract at residues Gly558–Ala597 is disordered. Positions Gln575–Ala597 are enriched in basic and acidic residues.

This sequence belongs to the class-II aminoacyl-tRNA synthetase family. Type 1 subfamily. In terms of assembly, homodimer.

The protein localises to the cytoplasm. The catalysed reaction is tRNA(Asx) + L-aspartate + ATP = L-aspartyl-tRNA(Asx) + AMP + diphosphate. In terms of biological role, aspartyl-tRNA synthetase with relaxed tRNA specificity since it is able to aspartylate not only its cognate tRNA(Asp) but also tRNA(Asn). Reaction proceeds in two steps: L-aspartate is first activated by ATP to form Asp-AMP and then transferred to the acceptor end of tRNA(Asp/Asn). This is Aspartate--tRNA(Asp/Asn) ligase from Mycobacteroides abscessus (strain ATCC 19977 / DSM 44196 / CCUG 20993 / CIP 104536 / JCM 13569 / NCTC 13031 / TMC 1543 / L948) (Mycobacterium abscessus).